Here is a 266-residue protein sequence, read N- to C-terminus: Glutathione S-transferase AN1595 (266 aa).

A GST N-terminal domain is found at 43-123; it reads SFGKLYTYKR…HVTNEDSTTT (81 aa). The glutathione site is built by lysine 93, glutamate 107, cysteine 108, and asparagine 143. Residue lysine 93 coordinates substrate. The GST C-terminal domain maps to 128–259; that stretch reads SSLDFVQIIR…VEEGLPNAPP (132 aa).

Belongs to the GST superfamily.

It participates in secondary metabolite biosynthesis; terpenoid biosynthesis. Functionally, glutathione S-transferase; part of the gene cluster that mediates the biosynthesis of the diterpene ent-pimara-8(14),15-diene (PD). Within the cluster, the HMG-CoA reductase AN1593 functions in the mevalonate pathway, which produces isoprenoid precursors. The geranylgeranyl pyrophosphate (GGPP) synthase AN1592 is needed in the formation of GGPP, the precursor for diterpenes. Lastly, the pimaradiene synthase pbcA performs the 2 cyclization steps that convert GGPP to ent-pimara-8(14),15-diene. The putative roles of the remaining cluster enzymes in ent-pimara-8(14),15-diene biosynthesis is unclear. The cytochrome P450 monooxygenase AN1598, the glutathione S-transferase AN1595, the oxidoreductases AN1596 and AN1597 probably function as decorative enzymes. It is possible that in biological conditions the compound is oxidized to ent-pimara-8(14),15-dien-19-oic acid, which is a bioactive diterpene compound predominant in many plant extracts. The sequence is that of Glutathione S-transferase AN1595 from Emericella nidulans (strain FGSC A4 / ATCC 38163 / CBS 112.46 / NRRL 194 / M139) (Aspergillus nidulans).